A 102-amino-acid polypeptide reads, in one-letter code: UPF0251 protein ASA_1331 (102 aa).

Belongs to the UPF0251 family.

This is UPF0251 protein ASA_1331 from Aeromonas salmonicida (strain A449).